Here is a 908-residue protein sequence, read N- to C-terminus: Zinc finger and BTB domain-containing protein 41 (908 aa).

The interval 38–59 (TQAPERPTPEAAQRCQELPPSP) is disordered. One can recognise a BTB domain in the interval 89–153 (CDLLIIVEGK…LYTSEFFVYK (65 aa)). The C2H2-type 1 zinc finger occupies 208–231 (HQCKFCSRHFCYKKSLENHLAKTH). Residues 252–261 (RRSKRNRKCP) show a composition bias toward basic residues. Residues 252 to 344 (RRSKRNRKCP…EAGDSAGSIH (93 aa)) are disordered. Acidic residues predominate over residues 267 to 276 (TSDDEQESGD). A compositionally biased stretch (basic and acidic residues) spans 279–296 (DNLHQESSEKERSDRNDS). The segment covering 297-336 (EDPGSEYNAEDEELEEEVSDEDSDTEQSDKDNDAEEEPEA) has biased composition (acidic residues). 13 C2H2-type zinc fingers span residues 360–382 (LQCP…TRVH), 388–410 (FECD…RKKH), 421–444 (HKCP…KRFH), 462–484 (WKCD…MILH), 490–513 (FKCT…EKFH), 517–540 (FPCD…ECTH), 546–568 (WTCF…LRIH), 574–596 (HLCS…LRVH), 602–624 (YECD…KKIH), 630–653 (HQCE…KSVH), 667–689 (HQCD…FRTH), 695–717 (YKCQ…LVIH), and 723–746 (FNCQ…DHVH).

Its subcellular location is the nucleus. In terms of biological role, may be involved in transcriptional regulation. The chain is Zinc finger and BTB domain-containing protein 41 (Zbtb41) from Mus musculus (Mouse).